A 166-amino-acid chain; its full sequence is 16S rRNA aminocarboxypropyltransferase (166 aa).

Thr17, Ile62, Leu84, Tyr99, and Ser103 together coordinate S-adenosyl-L-methionine.

It belongs to the TDD superfamily. TSR3 family.

The protein resides in the cytoplasm. It catalyses the reaction an N(1)-methylpseudouridine in rRNA + S-adenosyl-L-methionine = N(1)-methyl-N(3)-[(3S)-3-amino-3-carboxypropyl]pseudouridine in rRNA + S-methyl-5'-thioadenosine + H(+). In terms of biological role, aminocarboxypropyltransferase that catalyzes the aminocarboxypropyl transfer on pseudouridine corresponding to position 914 in M.jannaschii 16S rRNA. It constitutes the last step in biosynthesis of the hypermodified N1-methyl-N3-(3-amino-3-carboxypropyl) pseudouridine (m1acp3-Psi). This chain is 16S rRNA aminocarboxypropyltransferase, found in Saccharolobus islandicus (strain Y.N.15.51 / Yellowstone #2) (Sulfolobus islandicus).